Here is a 181-residue protein sequence, read N- to C-terminus: Cytochrome c-type biogenesis protein CcmE (181 aa).

Residues 1 to 8 are Cytoplasmic-facing; sequence MNPRRKSR. A helical; Signal-anchor for type II membrane protein transmembrane segment spans residues 9–29; sequence LKVVVLIMFSVAVAAGLTLYA. Over 30 to 181 the chain is Periplasmic; that stretch reads LSQNIDLFYT…TFNTLQGESK (152 aa). Residues histidine 131 and tyrosine 135 each contribute to the heme site.

The protein belongs to the CcmE/CycJ family.

The protein localises to the cell inner membrane. In terms of biological role, heme chaperone required for the biogenesis of c-type cytochromes. Transiently binds heme delivered by CcmC and transfers the heme to apo-cytochromes in a process facilitated by CcmF and CcmH. In Haemophilus ducreyi (strain 35000HP / ATCC 700724), this protein is Cytochrome c-type biogenesis protein CcmE.